The following is a 153-amino-acid chain: Ribosome maturation factor RimP (153 aa).

It belongs to the RimP family.

It localises to the cytoplasm. Its function is as follows. Required for maturation of 30S ribosomal subunits. The protein is Ribosome maturation factor RimP of Clostridium botulinum (strain Langeland / NCTC 10281 / Type F).